Consider the following 381-residue polypeptide: Neuropeptide Y receptor type 2 (381 aa).

The interval 1 to 35 (MGPIGTEADENQTVEEMKVEQYGPQTTPRGELVPD) is disordered. Topologically, residues 1–51 (MGPIGTEADENQTVEEMKVEQYGPQTTPRGELVPDPEPELIDSTKLIEVQV) are extracellular. A glycan (N-linked (GlcNAc...) asparagine) is linked at asparagine 11. Residues 52-72 (VLILAYCSIILLGVIGNSLVI) form a helical membrane-spanning segment. Residues 73–86 (HVVIKFKSMRTVTN) are Cytoplasmic-facing. The helical transmembrane segment at 87–107 (FFIANLAVADLVVNTLCLPFT) threads the bilayer. Topologically, residues 108–124 (LTYTLMGEWKMGPVLCH) are extracellular. The cysteines at positions 123 and 203 are disulfide-linked. Residues 125–145 (LVPYAQGLAVQVSTITLTVIA) traverse the membrane as a helical segment. Over 146–165 (LDRHRCIVYHLESKISKRIS) the chain is Cytoplasmic. Residues 166-186 (FLIIGLAWGISALLASPLAIF) form a helical membrane-spanning segment. At 187–216 (REYSLIEIIPDFEIVACTEKWPGEEKSIYG) the chain is on the extracellular side. The chain crosses the membrane as a helical span at residues 217 to 237 (TVYSLSSLLILYVLPLGIISF). Residues 238 to 268 (SYTRIWSKLKSHVSPGAANDHYHQRRQKTTK) lie on the Cytoplasmic side of the membrane. Residues 269–289 (MLVCVVVVFAVSWLPLHAFQL) traverse the membrane as a helical segment. The Extracellular portion of the chain corresponds to 290 to 304 (AVDIDSHVLDLKEYK). A helical transmembrane segment spans residues 305–325 (LIFTVFHIIAMCSTFANPLLY). Residues 326–381 (GWMNSNYRKAFLSAFRCEQRLDAIHSEVSVTFKAKKNLEVRKNSGPNDSFTEATNV) are Cytoplasmic-facing. Cysteine 342 carries the S-palmitoyl cysteine lipid modification.

The protein belongs to the G-protein coupled receptor 1 family.

It is found in the cell membrane. Receptor for neuropeptide Y and peptide YY. In Macaca mulatta (Rhesus macaque), this protein is Neuropeptide Y receptor type 2 (NPY2R).